The chain runs to 234 residues: Ubiquinone biosynthesis O-methyltransferase (234 aa).

Positions 40, 59, 80, and 123 each coordinate S-adenosyl-L-methionine.

Belongs to the methyltransferase superfamily. UbiG/COQ3 family.

It catalyses the reaction a 3-demethylubiquinol + S-adenosyl-L-methionine = a ubiquinol + S-adenosyl-L-homocysteine + H(+). It carries out the reaction a 3-(all-trans-polyprenyl)benzene-1,2-diol + S-adenosyl-L-methionine = a 2-methoxy-6-(all-trans-polyprenyl)phenol + S-adenosyl-L-homocysteine + H(+). Its pathway is cofactor biosynthesis; ubiquinone biosynthesis. Its function is as follows. O-methyltransferase that catalyzes the 2 O-methylation steps in the ubiquinone biosynthetic pathway. The sequence is that of Ubiquinone biosynthesis O-methyltransferase from Coxiella burnetii (strain Dugway 5J108-111).